The primary structure comprises 427 residues: Glutamate-1-semialdehyde 2,1-aminomutase (427 aa).

Residue Lys-265 is modified to N6-(pyridoxal phosphate)lysine.

It belongs to the class-III pyridoxal-phosphate-dependent aminotransferase family. HemL subfamily. As to quaternary structure, homodimer. It depends on pyridoxal 5'-phosphate as a cofactor.

Its subcellular location is the cytoplasm. The enzyme catalyses (S)-4-amino-5-oxopentanoate = 5-aminolevulinate. It participates in porphyrin-containing compound metabolism; protoporphyrin-IX biosynthesis; 5-aminolevulinate from L-glutamyl-tRNA(Glu): step 2/2. The polypeptide is Glutamate-1-semialdehyde 2,1-aminomutase (Marinomonas sp. (strain MWYL1)).